A 100-amino-acid polypeptide reads, in one-letter code: Small ribosomal subunit protein uS14 (100 aa).

This sequence belongs to the universal ribosomal protein uS14 family. As to quaternary structure, part of the 30S ribosomal subunit. Contacts proteins S3 and S10.

Its function is as follows. Binds 16S rRNA, required for the assembly of 30S particles and may also be responsible for determining the conformation of the 16S rRNA at the A site. The polypeptide is Small ribosomal subunit protein uS14 (Prochlorococcus marinus (strain MIT 9303)).